The sequence spans 298 residues: Apolipoprotein E (298 aa).

Residues 1 to 18 form the signal peptide; it reads MKILWAALVLTLLAGCRA. Tandem repeats lie at residues 74–95, 96–117, 118–139, 140–161, 162–183, and 223–244. The interval 74 to 244 is 8 X 22 AA approximate tandem repeats; the sequence is LLMEDTMKEL…RLEEVREQME (171 aa). Met-137 is modified (methionine sulfoxide). Residue Ser-141 is modified to Phosphoserine. The tract at residues 152–162 is LDL and other lipoprotein receptors binding; the sequence is HLRKLRKRLQR. 156 to 159 is a binding site for heparin; it reads LRKR. Residues 204–272 form a lipid-binding and lipoprotein association region; sequence ALTSHPLRER…SWFEPMVEDL (69 aa). Residue 218–225 coordinates heparin; it reads GEQVRGRL. A specificity for association with VLDL region spans residues 260–272; that stretch reads RLKSWFEPMVEDL.

The protein belongs to the apolipoprotein A1/A4/E family. Homotetramer. May interact with ABCA1; functionally associated with ABCA1 in the biogenesis of HDLs. May interact with APP/A4 amyloid-beta peptide; the interaction is extremely stable in vitro but its physiological significance is unclear. May interact with MAPT. May interact with MAP2. In the cerebrospinal fluid, interacts with secreted SORL1. Interacts with PMEL; this allows the loading of PMEL luminal fragment on ILVs to induce fibril nucleation. Post-translationally, APOE exists as multiple glycosylated and sialylated glycoforms within cells and in plasma. The extent of glycosylation and sialylation are tissue and context specific. In terms of processing, glycated in plasma VLDL. Phosphorylated by FAM20C in the extracellular medium.

The protein localises to the secreted. The protein resides in the extracellular space. It is found in the extracellular matrix. Its subcellular location is the extracellular vesicle. It localises to the endosome. The protein localises to the multivesicular body. In terms of biological role, APOE is an apolipoprotein, a protein associating with lipid particles, that mainly functions in lipoprotein-mediated lipid transport between organs via the plasma and interstitial fluids. APOE is a core component of plasma lipoproteins and is involved in their production, conversion and clearance. Apolipoproteins are amphipathic molecules that interact both with lipids of the lipoprotein particle core and the aqueous environment of the plasma. As such, APOE associates with chylomicrons, chylomicron remnants, very low density lipoproteins (VLDL) and intermediate density lipoproteins (IDL) but shows a preferential binding to high-density lipoproteins (HDL). It also binds a wide range of cellular receptors including the LDL receptor/LDLR, the LDL receptor-related proteins LRP1, LRP2 and LRP8 and the very low-density lipoprotein receptor/VLDLR that mediate the cellular uptake of the APOE-containing lipoprotein particles. Finally, APOE also has a heparin-binding activity and binds heparan-sulfate proteoglycans on the surface of cells, a property that supports the capture and the receptor-mediated uptake of APOE-containing lipoproteins by cells. A main function of APOE is to mediate lipoprotein clearance through the uptake of chylomicrons, VLDLs, and HDLs by hepatocytes. APOE is also involved in the biosynthesis by the liver of VLDLs as well as their uptake by peripheral tissues ensuring the delivery of triglycerides and energy storage in muscle, heart and adipose tissues. By participating in the lipoprotein-mediated distribution of lipids among tissues, APOE plays a critical role in plasma and tissues lipid homeostasis. APOE is also involved in two steps of reverse cholesterol transport, the HDLs-mediated transport of cholesterol from peripheral tissues to the liver, and thereby plays an important role in cholesterol homeostasis. First, it is functionally associated with ABCA1 in the biogenesis of HDLs in tissues. Second, it is enriched in circulating HDLs and mediates their uptake by hepatocytes. APOE also plays an important role in lipid transport in the central nervous system, regulating neuron survival and sprouting. The sequence is that of Apolipoprotein E (APOE) from Hydrochoerus hydrochaeris (Capybara).